Here is a 207-residue protein sequence, read N- to C-terminus: Large ribosomal subunit protein uL4 (207 aa).

Positions 49-75 are disordered; that stretch reads HAVKNRSAVSGGGRKPWKQKGTGRARA.

It belongs to the universal ribosomal protein uL4 family. As to quaternary structure, part of the 50S ribosomal subunit.

Its function is as follows. One of the primary rRNA binding proteins, this protein initially binds near the 5'-end of the 23S rRNA. It is important during the early stages of 50S assembly. It makes multiple contacts with different domains of the 23S rRNA in the assembled 50S subunit and ribosome. In terms of biological role, forms part of the polypeptide exit tunnel. This is Large ribosomal subunit protein uL4 from Leuconostoc mesenteroides subsp. mesenteroides (strain ATCC 8293 / DSM 20343 / BCRC 11652 / CCM 1803 / JCM 6124 / NCDO 523 / NBRC 100496 / NCIMB 8023 / NCTC 12954 / NRRL B-1118 / 37Y).